Consider the following 169-residue polypeptide: uncharacterized protein (169 aa).

4 N-linked (GlcNAc...) asparagine; by host glycosylation sites follow: N13, N29, N39, and N48. The Cell attachment site motif lies at 109–111; it reads RGD. N-linked (GlcNAc...) asparagine; by host glycosylation is present at N135. Residues 145–165 traverse the membrane as a helical segment; the sequence is IYHMAIVYILIMYQIYILSLI.

It localises to the membrane. This is an uncharacterized protein from Acanthamoeba polyphaga (Amoeba).